We begin with the raw amino-acid sequence, 204 residues long: Ribonuclease HII (204 aa).

Residues 1-197 (MILGIDEAGR…KNRILNPKLL (197 aa)) enclose the RNase H type-2 domain. Asp6, Glu7, and Asp103 together coordinate a divalent metal cation.

The protein belongs to the RNase HII family. The cofactor is Mn(2+). Requires Mg(2+) as cofactor.

The protein localises to the cytoplasm. It carries out the reaction Endonucleolytic cleavage to 5'-phosphomonoester.. Functionally, endonuclease that specifically degrades the RNA of RNA-DNA hybrids. This chain is Ribonuclease HII, found in Helicobacter pylori (strain Shi470).